Reading from the N-terminus, the 379-residue chain is Very late expression factor 1 (379 aa).

The region spanning 169–348 (VIDTILNFIN…YNIGLDETSS (180 aa)) is the Tyr recombinase domain. Catalysis depends on residues Arg-210, Lys-239, Arg-303, and His-326. Tyr-335 acts as the O-(3'-phospho-DNA)-tyrosine intermediate in catalysis. Over residues 346–358 (TSSEEENNNDDDD) the composition is skewed to acidic residues. The segment at 346-379 (TSSEEENNNDDDDAQHNRNSSGSSGESLLYYRNE) is disordered. The span at 362–379 (NRNSSGSSGESLLYYRNE) shows a compositional bias: low complexity.

This sequence belongs to the 'phage' integrase family.

Its function is as follows. Plays a role in nucleocapsid assembly and serves an essential function during the final stages of the DNA packaging process. Participates in the processing of branched DNA molecules at the late stages of viral genome replication. The polypeptide is Very late expression factor 1 (VLF-1) (Lepidoptera (butterflies and moths)).